The chain runs to 301 residues: Protoheme IX farnesyltransferase (301 aa).

Transmembrane regions (helical) follow at residues 9 to 29 (VLAYIALTKPRVIELLLVATI), 42 to 62 (IALILSTLFGGWMGAASANSL), 89 to 109 (TSHAFVFGMTLGVASFLWLWW), 113 to 133 (LLAGCLVVLTIAFYVLVYTMV), 142 to 162 (VVWGGAAGCMPVMVGWSAVTG), 168 to 188 (PIVLFLVIFFWTPPHTWALAM), 211 to 231 (VTKQILLYSWAMVITSLTLVP), 232 to 252 (AAGVVYAAVTLVAGAWFLLMA), and 280 to 300 (VVFVGLAVDSVLGLQTVGSLL).

The protein belongs to the UbiA prenyltransferase family. Protoheme IX farnesyltransferase subfamily.

It localises to the cell membrane. The catalysed reaction is heme b + (2E,6E)-farnesyl diphosphate + H2O = Fe(II)-heme o + diphosphate. The protein operates within porphyrin-containing compound metabolism; heme O biosynthesis; heme O from protoheme: step 1/1. In terms of biological role, converts heme B (protoheme IX) to heme O by substitution of the vinyl group on carbon 2 of heme B porphyrin ring with a hydroxyethyl farnesyl side group. This Rhodococcus jostii (strain RHA1) protein is Protoheme IX farnesyltransferase.